We begin with the raw amino-acid sequence, 366 residues long: tRNA/tmRNA (uracil-C(5))-methyltransferase (366 aa).

Positions 189, 217, 222, 238, and 298 each coordinate S-adenosyl-L-methionine. Residue cysteine 323 is the Nucleophile of the active site. The Proton acceptor role is filled by glutamate 357.

It belongs to the class I-like SAM-binding methyltransferase superfamily. RNA M5U methyltransferase family. TrmA subfamily.

It catalyses the reaction uridine(54) in tRNA + S-adenosyl-L-methionine = 5-methyluridine(54) in tRNA + S-adenosyl-L-homocysteine + H(+). The enzyme catalyses uridine(341) in tmRNA + S-adenosyl-L-methionine = 5-methyluridine(341) in tmRNA + S-adenosyl-L-homocysteine + H(+). In terms of biological role, dual-specificity methyltransferase that catalyzes the formation of 5-methyluridine at position 54 (m5U54) in all tRNAs, and that of position 341 (m5U341) in tmRNA (transfer-mRNA). The chain is tRNA/tmRNA (uracil-C(5))-methyltransferase from Shewanella putrefaciens (strain CN-32 / ATCC BAA-453).